Consider the following 173-residue polypeptide: Probable DNA-directed RNA polymerase subunit delta (173 aa).

The HTH HARE-type domain occupies 14-81; it reads NSFIDLAYMA…GEYMWGLRDW (68 aa). Positions 113 to 173 are disordered; that stretch reads LLGEDEVEDE…DEFDDEEEEE (61 aa). Positions 115 to 173 are enriched in acidic residues; that stretch reads GEDEVEDELDLLPSDGDEENVDTEDEEVEDELDEAGLVVEPDEEFEDEEDEFDDEEEEE.

This sequence belongs to the RpoE family. As to quaternary structure, RNAP is composed of a core of 2 alpha, a beta and a beta' subunits. The core is associated with a delta subunit and one of several sigma factors.

Participates in both the initiation and recycling phases of transcription. In the presence of the delta subunit, RNAP displays an increased specificity of transcription, a decreased affinity for nucleic acids, and an increased efficiency of RNA synthesis because of enhanced recycling. The chain is Probable DNA-directed RNA polymerase subunit delta from Macrococcus caseolyticus (strain JCSC5402) (Macrococcoides caseolyticum).